Here is a 356-residue protein sequence, read N- to C-terminus: 1-deoxy-D-xylulose 5-phosphate reductoisomerase (356 aa).

7 residues coordinate NADPH: Thr-7, Gly-8, Ser-9, Ile-10, Gly-31, Asn-33, and Asn-111. Residue Lys-112 participates in 1-deoxy-D-xylulose 5-phosphate binding. Glu-113 serves as a coordination point for NADPH. A Mn(2+)-binding site is contributed by Asp-131. 1-deoxy-D-xylulose 5-phosphate is bound by residues Ser-132, Glu-133, Ser-155, and His-178. Residue Glu-133 coordinates Mn(2+). Gly-184 contacts NADPH. 1-deoxy-D-xylulose 5-phosphate is bound by residues Ser-191, Asn-196, Lys-197, and Glu-200. Glu-200 is a binding site for Mn(2+).

The protein belongs to the DXR family. Mg(2+) serves as cofactor. Requires Mn(2+) as cofactor.

It carries out the reaction 2-C-methyl-D-erythritol 4-phosphate + NADP(+) = 1-deoxy-D-xylulose 5-phosphate + NADPH + H(+). It participates in isoprenoid biosynthesis; isopentenyl diphosphate biosynthesis via DXP pathway; isopentenyl diphosphate from 1-deoxy-D-xylulose 5-phosphate: step 1/6. In terms of biological role, catalyzes the NADPH-dependent rearrangement and reduction of 1-deoxy-D-xylulose-5-phosphate (DXP) to 2-C-methyl-D-erythritol 4-phosphate (MEP). The polypeptide is 1-deoxy-D-xylulose 5-phosphate reductoisomerase (Campylobacter jejuni subsp. doylei (strain ATCC BAA-1458 / RM4099 / 269.97)).